We begin with the raw amino-acid sequence, 372 residues long: MRSKVTGAKRWVVKIGSALLTADGKGLDRGAMAVWVEQMVALREAGVELVLVSSGAVAAGMSQLGWTKRPSAMNELQAAASLGQMRLVQAWESSFGEHGKHTAQILLTHDDLSDRKRYLNARSTLRTLVDLGVVPVINENDTVVTDEIRFGDNDTLAALVANLVEADLLVILTDRDGMFDADPRNNPEAQLIYEARADDPSLDAVAGGTGGALGRGGMQTKLRAARLAARSGAHTIIIGGRIERVLDRLKAGERLGTLLSPERGMLAARKQWLAGHLQTRGTLVLDAGAVQALRQANKSLLPVGVKTVQGSFRRGEMVVCVGPDGVEVARGLANYSALEAQKIIGQSSEAIESILGYSAEPELVHRDNLVLV.

Residue K14 participates in ATP binding. Substrate contacts are provided by S54, D141, and N153. Position 173–174 (173–174) interacts with ATP; it reads TD. The region spanning 280 to 358 is the PUA domain; sequence RGTLVLDAGA…EAIESILGYS (79 aa).

The protein belongs to the glutamate 5-kinase family.

It is found in the cytoplasm. The catalysed reaction is L-glutamate + ATP = L-glutamyl 5-phosphate + ADP. It functions in the pathway amino-acid biosynthesis; L-proline biosynthesis; L-glutamate 5-semialdehyde from L-glutamate: step 1/2. In terms of biological role, catalyzes the transfer of a phosphate group to glutamate to form L-glutamate 5-phosphate. This Pseudomonas putida (strain ATCC 700007 / DSM 6899 / JCM 31910 / BCRC 17059 / LMG 24140 / F1) protein is Glutamate 5-kinase.